Here is a 545-residue protein sequence, read N- to C-terminus: Chaperonin GroEL (545 aa).

ATP is bound by residues 30–33 (TLGP), Lys-51, 87–91 (DGTTT), Gly-415, 479–481 (NAA), and Asp-495.

The protein belongs to the chaperonin (HSP60) family. In terms of assembly, forms a cylinder of 14 subunits composed of two heptameric rings stacked back-to-back. Interacts with the co-chaperonin GroES.

It is found in the cytoplasm. It carries out the reaction ATP + H2O + a folded polypeptide = ADP + phosphate + an unfolded polypeptide.. Together with its co-chaperonin GroES, plays an essential role in assisting protein folding. The GroEL-GroES system forms a nano-cage that allows encapsulation of the non-native substrate proteins and provides a physical environment optimized to promote and accelerate protein folding. This is Chaperonin GroEL from Cellvibrio japonicus (strain Ueda107) (Pseudomonas fluorescens subsp. cellulosa).